Here is a 510-residue protein sequence, read N- to C-terminus: MGSEALVHVFLVSFPGQGHVNPLLRLGKRLAAKGLLVTFSTPESIGKQMRKASNITDEPAPVGEGFIRFEFFEDGWDEDEPRRQDLDQYLPQLELIGKDIIPKMIRKNAEMGRPVSCLINNPFIPWVSDVAESLGLPSAMLWVQSCACFCAYYHYYHGLVPFPSEAEPFIDIQLPCMPLLKYDETPSFLYPTTPYPFLRRAILGQYGNLDKPFCILMDTFQELEHEVIEFMSKICPIKTVGPLFKNPKAPNSVRGDFMKADDCLEWLDSKPPQSVVYISFGSVVYLTQKQVDEIAFGLLQSGVSFLWVMKPPHKDAGLELLVLPDGFLEKAGDNGRVVQWSPQEQVLAHPSVACFVTHCGWNSTMESLTSGMPVVAFPQWGDQVTDAVYLVDVFKTGVRMCRGEAENRVITRDEVEKCLLEATVGPKAVEMKQNASKWKAAAEAAFSEGGSSDRNIQAFVDEVRARSVAITGKSTANGVALDLAEKSAEINGKVDLVETKTNGKVELVEA.

The active-site Proton acceptor is H19. H19 serves as a coordination point for an anthocyanidin. Residues Q343, H358, W361, N362, S363, and E366 each coordinate UDP-alpha-D-glucose. Position 381 (G381) interacts with an anthocyanidin. 2 residues coordinate UDP-alpha-D-glucose: D382 and Q383.

Belongs to the UDP-glycosyltransferase family. In terms of tissue distribution, expressed in swelling buds and young leaves.

The catalysed reaction is 3,4,5-trihydroxybenzoate + UDP-alpha-D-glucose = 1-O-galloyl-beta-D-glucose + UDP. The enzyme catalyses vanillate + UDP-alpha-D-glucose = 1-O-(4-hydroxy-3-methoxybenzoyl)-beta-D-glucose + UDP. It catalyses the reaction 3,4-dihydroxybenzoate + UDP-alpha-D-glucose = 1-O-(3,4-dihydroxy-benzoyl)-beta-D-glucose + UDP. In terms of biological role, glucosyltransferase that catalyzes the formation of 1-O-beta-D-glucose esters with hydroxybenzoic acids as preferred glucosyl acceptors. Has the highest activity with 3,4-dihydroxybenzoate, vanillate and gallate in vitro. Gallate is the predicted native substrate of the enzyme, which thus catalyzes the formation of 1-O-galloyl-beta-D-glucose, the first committed step of gallotannin biosynthesis. The protein is Gallate 1-beta-glucosyltransferase of Quercus robur (English oak).